Consider the following 335-residue polypeptide: Glycerol-3-phosphate dehydrogenase [NAD(P)+] (335 aa).

The NADPH site is built by Ser-10, Phe-11, Arg-31, and Lys-105. Sn-glycerol 3-phosphate is bound by residues Lys-105, Gly-136, and Ser-138. Ala-140 lines the NADPH pocket. 5 residues coordinate sn-glycerol 3-phosphate: Lys-191, Asp-244, Ser-254, Arg-255, and Asn-256. The active-site Proton acceptor is Lys-191. Arg-255 serves as a coordination point for NADPH. Positions 279 and 281 each coordinate NADPH.

This sequence belongs to the NAD-dependent glycerol-3-phosphate dehydrogenase family.

The protein localises to the cytoplasm. The enzyme catalyses sn-glycerol 3-phosphate + NAD(+) = dihydroxyacetone phosphate + NADH + H(+). The catalysed reaction is sn-glycerol 3-phosphate + NADP(+) = dihydroxyacetone phosphate + NADPH + H(+). It functions in the pathway membrane lipid metabolism; glycerophospholipid metabolism. Its function is as follows. Catalyzes the reduction of the glycolytic intermediate dihydroxyacetone phosphate (DHAP) to sn-glycerol 3-phosphate (G3P), the key precursor for phospholipid synthesis. This is Glycerol-3-phosphate dehydrogenase [NAD(P)+] from Leptospira interrogans serogroup Icterohaemorrhagiae serovar copenhageni (strain Fiocruz L1-130).